We begin with the raw amino-acid sequence, 907 residues long: Isoleucine--tRNA ligase (907 aa).

A 'HIGH' region motif is present at residues 57-67; that stretch reads PFANGKAHMGS. An L-isoleucyl-5'-AMP-binding site is contributed by E549. Positions 590-594 match the 'KMSKS' region motif; the sequence is KLSKS. Residue K593 participates in ATP binding. Zn(2+) contacts are provided by C867, C870, C889, and C892.

Belongs to the class-I aminoacyl-tRNA synthetase family. IleS type 1 subfamily. Monomer. Zn(2+) serves as cofactor.

Its subcellular location is the cytoplasm. It catalyses the reaction tRNA(Ile) + L-isoleucine + ATP = L-isoleucyl-tRNA(Ile) + AMP + diphosphate. Catalyzes the attachment of isoleucine to tRNA(Ile). As IleRS can inadvertently accommodate and process structurally similar amino acids such as valine, to avoid such errors it has two additional distinct tRNA(Ile)-dependent editing activities. One activity is designated as 'pretransfer' editing and involves the hydrolysis of activated Val-AMP. The other activity is designated 'posttransfer' editing and involves deacylation of mischarged Val-tRNA(Ile). The chain is Isoleucine--tRNA ligase from Methylacidiphilum infernorum (isolate V4) (Methylokorus infernorum (strain V4)).